We begin with the raw amino-acid sequence, 243 residues long: Glutathione S-transferase U14 (243 aa).

In terms of domain architecture, GST N-terminal spans 5–87 (DTVKLIGCSD…YLDEAWPSDP (83 aa)). Residues 15-16 (DP), 44-45 (EK), 58-59 (KT), and 71-72 (ES) contribute to the glutathione site. Positions 93 to 220 (NAYDRASARF…MPTVEEVTEL (128 aa)) constitute a GST C-terminal domain. At T159 the chain carries Phosphothreonine.

This sequence belongs to the GST superfamily. Tau family.

It is found in the cytoplasm. The protein resides in the cytosol. It catalyses the reaction RX + glutathione = an S-substituted glutathione + a halide anion + H(+). May be involved in the conjugation of reduced glutathione to a wide number of exogenous and endogenous hydrophobic electrophiles and have a detoxification role against certain herbicides. The polypeptide is Glutathione S-transferase U14 (GSTU14) (Arabidopsis thaliana (Mouse-ear cress)).